A 130-amino-acid polypeptide reads, in one-letter code: MASNFTQFVLVNDGGTGNVTVAPSNFANGVAEWISSNSRSQAYKVTCSVRQSSAQNRKYTIKVEVPKVATQTVGGVELPVAAWRSYLNMELTIPIFATNSDCELIVKAMQGLLKDGNPIPSAIAANSGIY.

The interval 32 to 105 (EWISSNSRSQ…FATNSDCELI (74 aa)) is viral RNA-binding.

It belongs to the Leviviricetes capsid protein family. Homodimer. The capsid proteins form dimers that assemble by group of 5. Twelve such pentamers are linked together with free dimers. The homodimers binds to the viral RNA via an operator hairpin, but also to many other RNA sequences in the viral genome; this interaction probably shifts the virus from the replicative to the assembly phase and ensures specific encapsidation of the viral genome.

The protein resides in the virion. Capsid protein self-assembles to form an icosahedral capsid with a T=3 symmetry, about 26 nm in diameter, and consisting of 89 capsid proteins dimers (178 capsid proteins). Involved in viral genome encapsidation through the interaction between a capsid protein dimer and the multiple packaging signals present in the RNA genome. The capsid also contains 1 copy of the A2 maturation protein. In terms of biological role, acts as a translational repressor of viral replicase synthesis late in infection. This latter function is the result of capsid protein interaction with an RNA hairpin which contains the replicase ribosome-binding site. The sequence is that of Capsid protein from Enterobacteria phage ZR (Bacteriophage ZR).